We begin with the raw amino-acid sequence, 114 residues long: Nucleoid-associated protein PCC8801_2554 (114 aa).

This sequence belongs to the YbaB/EbfC family. In terms of assembly, homodimer.

It is found in the cytoplasm. The protein resides in the nucleoid. Its function is as follows. Binds to DNA and alters its conformation. May be involved in regulation of gene expression, nucleoid organization and DNA protection. The protein is Nucleoid-associated protein PCC8801_2554 of Rippkaea orientalis (strain PCC 8801 / RF-1) (Cyanothece sp. (strain PCC 8801)).